A 264-amino-acid chain; its full sequence is 3-methyl-2-oxobutanoate hydroxymethyltransferase (264 aa).

Mg(2+) is bound by residues aspartate 45 and aspartate 84. 3-methyl-2-oxobutanoate-binding positions include 45–46 (DS), aspartate 84, and lysine 112. Glutamate 114 is a binding site for Mg(2+). Catalysis depends on glutamate 181, which acts as the Proton acceptor.

This sequence belongs to the PanB family. Homodecamer; pentamer of dimers. The cofactor is Mg(2+).

It is found in the cytoplasm. It catalyses the reaction 3-methyl-2-oxobutanoate + (6R)-5,10-methylene-5,6,7,8-tetrahydrofolate + H2O = 2-dehydropantoate + (6S)-5,6,7,8-tetrahydrofolate. It functions in the pathway cofactor biosynthesis; (R)-pantothenate biosynthesis; (R)-pantoate from 3-methyl-2-oxobutanoate: step 1/2. Its function is as follows. Catalyzes the reversible reaction in which hydroxymethyl group from 5,10-methylenetetrahydrofolate is transferred onto alpha-ketoisovalerate to form ketopantoate. This chain is 3-methyl-2-oxobutanoate hydroxymethyltransferase, found in Shewanella halifaxensis (strain HAW-EB4).